The sequence spans 65 residues: Small ribosomal subunit protein eS27 (65 aa).

Cys-20, Cys-23, Cys-39, and Cys-42 together coordinate Zn(2+). Residues Cys-20–Cys-42 form a C4-type zinc finger.

It belongs to the eukaryotic ribosomal protein eS27 family. Part of the 30S ribosomal subunit. Zn(2+) serves as cofactor.

In Thermococcus onnurineus (strain NA1), this protein is Small ribosomal subunit protein eS27.